The following is a 165-amino-acid chain: Crossover junction endodeoxyribonuclease RuvC (165 aa).

Active-site residues include D7, E67, and D140. Residues D7, E67, and D140 each contribute to the Mg(2+) site.

The protein belongs to the RuvC family. As to quaternary structure, homodimer which binds Holliday junction (HJ) DNA. The HJ becomes 2-fold symmetrical on binding to RuvC with unstacked arms; it has a different conformation from HJ DNA in complex with RuvA. In the full resolvosome a probable DNA-RuvA(4)-RuvB(12)-RuvC(2) complex forms which resolves the HJ. Mg(2+) serves as cofactor.

The protein localises to the cytoplasm. The catalysed reaction is Endonucleolytic cleavage at a junction such as a reciprocal single-stranded crossover between two homologous DNA duplexes (Holliday junction).. The RuvA-RuvB-RuvC complex processes Holliday junction (HJ) DNA during genetic recombination and DNA repair. Endonuclease that resolves HJ intermediates. Cleaves cruciform DNA by making single-stranded nicks across the HJ at symmetrical positions within the homologous arms, yielding a 5'-phosphate and a 3'-hydroxyl group; requires a central core of homology in the junction. The consensus cleavage sequence is 5'-(A/T)TT(C/G)-3'. Cleavage occurs on the 3'-side of the TT dinucleotide at the point of strand exchange. HJ branch migration catalyzed by RuvA-RuvB allows RuvC to scan DNA until it finds its consensus sequence, where it cleaves and resolves the cruciform DNA. This Thermotoga petrophila (strain ATCC BAA-488 / DSM 13995 / JCM 10881 / RKU-1) protein is Crossover junction endodeoxyribonuclease RuvC.